A 372-amino-acid chain; its full sequence is GDP-mannose 4,6-dehydratase (372 aa).

NADP(+) contacts are provided by residues 9–14 (GVTGQD), 64–65 (DL), 86–90 (LGAQS), and Tyr-101. Residue Thr-133 is part of the active site. Residues Glu-135 and Tyr-157 each act as nucleophile in the active site. 3 residues coordinate NADP(+): Lys-161, His-187, and Arg-192.

It belongs to the NAD(P)-dependent epimerase/dehydratase family. GDP-mannose 4,6-dehydratase subfamily. Requires NADP(+) as cofactor.

It catalyses the reaction GDP-alpha-D-mannose = GDP-4-dehydro-alpha-D-rhamnose + H2O. Its pathway is nucleotide-sugar biosynthesis; GDP-L-fucose biosynthesis via de novo pathway; GDP-L-fucose from GDP-alpha-D-mannose: step 1/2. Functionally, catalyzes the conversion of GDP-D-mannose to GDP-4-dehydro-6-deoxy-D-mannose. This chain is GDP-mannose 4,6-dehydratase, found in Vibrio cholerae.